Here is a 463-residue protein sequence, read N- to C-terminus: tRNA modification GTPase MnmE (463 aa).

(6S)-5-formyl-5,6,7,8-tetrahydrofolate contacts are provided by Arg30, Glu92, and Arg132. The region spanning 227-386 (GLRVALVGRP…LVQAVLERCG (160 aa)) is the TrmE-type G domain. Asn237 lines the K(+) pocket. GTP contacts are provided by residues 237 to 242 (NVGKSS), 256 to 262 (TDLPGTT), 281 to 284 (DTAG), and 342 to 345 (NKAD). Residue Ser241 participates in Mg(2+) binding. The K(+) site is built by Thr256, Leu258, and Thr261. Thr262 contributes to the Mg(2+) binding site. A (6S)-5-formyl-5,6,7,8-tetrahydrofolate-binding site is contributed by Lys463.

This sequence belongs to the TRAFAC class TrmE-Era-EngA-EngB-Septin-like GTPase superfamily. TrmE GTPase family. Homodimer. Heterotetramer of two MnmE and two MnmG subunits. Requires K(+) as cofactor.

It is found in the cytoplasm. Exhibits a very high intrinsic GTPase hydrolysis rate. Involved in the addition of a carboxymethylaminomethyl (cmnm) group at the wobble position (U34) of certain tRNAs, forming tRNA-cmnm(5)s(2)U34. This Synechococcus sp. (strain CC9311) protein is tRNA modification GTPase MnmE.